Here is a 522-residue protein sequence, read N- to C-terminus: Maturase K (522 aa).

Belongs to the intron maturase 2 family. MatK subfamily.

It localises to the plastid. The protein resides in the chloroplast. Usually encoded in the trnK tRNA gene intron. Probably assists in splicing its own and other chloroplast group II introns. In Aristea glauca, this protein is Maturase K.